Here is a 234-residue protein sequence, read N- to C-terminus: Potassium/proton antiporter CemA (234 aa).

A run of 4 helical transmembrane segments spans residues 8–28 (IPLRYLSSIVFVVFLPWWIPL), 117–137 (TICFVILSGYSILCNEELFIL), 157–177 (ILFVTDLCIGFHSPRGWELLI), and 193–213 (IILSVLVSTFPVVLDTFFKYW).

It belongs to the CemA family.

It is found in the plastid. Its subcellular location is the chloroplast inner membrane. The enzyme catalyses K(+)(in) + H(+)(out) = K(+)(out) + H(+)(in). Contributes to K(+)/H(+) antiport activity by supporting proton efflux to control proton extrusion and homeostasis in chloroplasts in a light-dependent manner to modulate photosynthesis. Prevents excessive induction of non-photochemical quenching (NPQ) under continuous-light conditions. Indirectly promotes efficient inorganic carbon uptake into chloroplasts. This Citrus sinensis (Sweet orange) protein is Potassium/proton antiporter CemA.